Reading from the N-terminus, the 389-residue chain is MLLEIARWLSDDVRAIGVLEYITMRAVLACATALLIGLVAGPRVIRKLTEMKIGQAVRAYGPESHLVKTGTPTMGGALILIAVAISTLLWADWTNRFVWVVLLVTFGFGWIGWMDDYRKVVYRDPEGMPARQKFFWQATIGLVAAVYLAFAVSAPANTELWPLFKAWVSSGFAMPLPTRADLIVPFFKSVSYPLGVLGFVALTWAVIVGTSNAVNLTDGLDGLAIMPTVMVGSALGIFAYVVGRVDYSKYLLFPYIPGAAELMVLCAAIAGAGLAFLWFNAYPAQVFMGDVGALALGGALGTIAVIVRQEIVLFIMGGVFVVETLSVMMQVTWFKYTKRKYGQGRRIFRMAPLHHHFEVGGWKETQVVVRFWIISMMLVLIGLSTLKLR.

11 helical membrane-spanning segments follow: residues 21 to 41 (YITM…LVAG), 71 to 91 (TPTM…LLWA), 97 to 117 (FVWV…MDDY), 134 to 154 (FFWQ…AVSA), 167 to 187 (WVSS…VPFF), 190 to 210 (VSYP…IVGT), 222 to 242 (GLAI…AYVV), 259 to 279 (AAEL…FLWF), 286 to 306 (VFMG…IAVI), 311 to 331 (IVLF…MMQV), and 366 to 386 (QVVV…LSTL).

It belongs to the glycosyltransferase 4 family. MraY subfamily. It depends on Mg(2+) as a cofactor.

It is found in the cell inner membrane. It catalyses the reaction UDP-N-acetyl-alpha-D-muramoyl-L-alanyl-gamma-D-glutamyl-meso-2,6-diaminopimeloyl-D-alanyl-D-alanine + di-trans,octa-cis-undecaprenyl phosphate = di-trans,octa-cis-undecaprenyl diphospho-N-acetyl-alpha-D-muramoyl-L-alanyl-D-glutamyl-meso-2,6-diaminopimeloyl-D-alanyl-D-alanine + UMP. Its pathway is cell wall biogenesis; peptidoglycan biosynthesis. Its function is as follows. Catalyzes the initial step of the lipid cycle reactions in the biosynthesis of the cell wall peptidoglycan: transfers peptidoglycan precursor phospho-MurNAc-pentapeptide from UDP-MurNAc-pentapeptide onto the lipid carrier undecaprenyl phosphate, yielding undecaprenyl-pyrophosphoryl-MurNAc-pentapeptide, known as lipid I. The protein is Phospho-N-acetylmuramoyl-pentapeptide-transferase of Bordetella petrii (strain ATCC BAA-461 / DSM 12804 / CCUG 43448).